The primary structure comprises 119 residues: Large ribosomal subunit protein uL24 (119 aa).

This sequence belongs to the universal ribosomal protein uL24 family. As to quaternary structure, part of the 50S ribosomal subunit.

Its function is as follows. One of two assembly initiator proteins, it binds directly to the 5'-end of the 23S rRNA, where it nucleates assembly of the 50S subunit. Located at the polypeptide exit tunnel on the outside of the subunit. This Haloquadratum walsbyi (strain DSM 16790 / HBSQ001) protein is Large ribosomal subunit protein uL24.